A 304-amino-acid polypeptide reads, in one-letter code: MAHYRNDYKKNDEVEFVRTGYGKDMIKVLHIQRDGKYHSIKEVATSVQLTLSSKKDYLHGDNSDVIPTDTIKNTVNVLAKFKGIKSIETFAVTICEHFLSSFKHVIRAQVYVEEVPWKRFEKNGVKHVHAFIYTPTGTHFCEVEQIRNGPPVIHSGIKDLKVLKTTQSGFEGFIKDQFTTLPEVKDRCFATQVYCKWRYHQGRDVDFEATWDTVRSIVLQKFAGPYDKGEYSPSVQKTLYDIQVLTLGQVPEIEDMEISLPNIHYLNIDMSKMGLINKEEVLLPLDNPYGRITGTVKRKLTSRL.

An N-acetylalanine modification is found at alanine 2. N6-acetyllysine; alternate is present on residues lysine 10 and lysine 23. An N6-succinyllysine; alternate mark is found at lysine 10 and lysine 23. Lysine 23 (charge relay system) is an active-site residue. N6-acetyllysine is present on residues lysine 27 and lysine 36. Phosphoserine occurs at positions 39 and 63. The active-site Charge relay system is the threonine 68. Threonine 68 and aspartate 69 together coordinate urate. Residues lysine 118, lysine 122, and lysine 164 each carry the N6-acetyllysine modification. Phenylalanine 170 is a binding site for urate. N6-acetyllysine is present on residues lysine 175 and lysine 185. Arginine 187 is a urate binding site. N6-acetyllysine; alternate is present on residues lysine 221 and lysine 228. N6-succinyllysine; alternate is present on residues lysine 221 and lysine 228. Residue serine 232 is modified to Phosphoserine. Positions 235, 236, and 262 each coordinate urate. Histidine 264 (charge relay system) is an active-site residue. The residue at position 278 (lysine 278) is an N6-acetyllysine. Tyrosine 289 carries the post-translational modification Phosphotyrosine. The short motif at 302–304 is the Microbody targeting signal element; it reads SRL.

It belongs to the uricase family. In terms of assembly, homotetramer.

Its subcellular location is the peroxisome. It catalyses the reaction urate + O2 + H2O = 5-hydroxyisourate + H2O2. It participates in purine metabolism; urate degradation; (S)-allantoin from urate: step 1/3. Its function is as follows. Catalyzes the oxidation of uric acid to 5-hydroxyisourate, which is further processed to form (S)-allantoin. This Sus scrofa (Pig) protein is Uricase (UOX).